Reading from the N-terminus, the 158-residue chain is Cyclic pyranopterin monophosphate synthase (158 aa).

Substrate contacts are provided by residues 74–76 (MCH) and 112–113 (ME). Residue D127 is part of the active site.

Belongs to the MoaC family. As to quaternary structure, homohexamer; trimer of dimers.

It carries out the reaction (8S)-3',8-cyclo-7,8-dihydroguanosine 5'-triphosphate = cyclic pyranopterin phosphate + diphosphate. It participates in cofactor biosynthesis; molybdopterin biosynthesis. In terms of biological role, catalyzes the conversion of (8S)-3',8-cyclo-7,8-dihydroguanosine 5'-triphosphate to cyclic pyranopterin monophosphate (cPMP). The polypeptide is Cyclic pyranopterin monophosphate synthase (Helicobacter pylori (strain G27)).